The primary structure comprises 392 residues: Formate-dependent phosphoribosylglycinamide formyltransferase (392 aa).

N(1)-(5-phospho-beta-D-ribosyl)glycinamide-binding positions include 22–23 (EL) and glutamate 82. Residues arginine 114, lysine 155, 160-165 (SSGKGQ), 195-198 (EGVV), and glutamate 203 contribute to the ATP site. An ATP-grasp domain is found at 119 to 308 (RLAAEELQLP…EFALHVRAFL (190 aa)). Residues glutamate 267 and glutamate 279 each coordinate Mg(2+). Residues aspartate 286, lysine 355, and 362 to 363 (RR) contribute to the N(1)-(5-phospho-beta-D-ribosyl)glycinamide site.

Belongs to the PurK/PurT family. Homodimer.

It catalyses the reaction N(1)-(5-phospho-beta-D-ribosyl)glycinamide + formate + ATP = N(2)-formyl-N(1)-(5-phospho-beta-D-ribosyl)glycinamide + ADP + phosphate + H(+). The protein operates within purine metabolism; IMP biosynthesis via de novo pathway; N(2)-formyl-N(1)-(5-phospho-D-ribosyl)glycinamide from N(1)-(5-phospho-D-ribosyl)glycinamide (formate route): step 1/1. Functionally, involved in the de novo purine biosynthesis. Catalyzes the transfer of formate to 5-phospho-ribosyl-glycinamide (GAR), producing 5-phospho-ribosyl-N-formylglycinamide (FGAR). Formate is provided by PurU via hydrolysis of 10-formyl-tetrahydrofolate. The polypeptide is Formate-dependent phosphoribosylglycinamide formyltransferase (Shigella boydii serotype 18 (strain CDC 3083-94 / BS512)).